The chain runs to 682 residues: Potassium-transporting ATPase ATP-binding subunit (682 aa).

4 helical membrane-spanning segments follow: residues 34–54 (PVMF…IAMA), 62–82 (ALFS…ANFA), 219–239 (IALT…TATL), and 254–274 (VLVA…LSAI). The active-site 4-aspartylphosphate intermediate is aspartate 307. Residues aspartate 344, glutamate 348, 377–384 (FTAQSRMS), and lysine 395 each bind ATP. The Mg(2+) site is built by aspartate 518 and aspartate 522. 3 consecutive transmembrane segments (helical) span residues 588 to 608 (FAII…LNIM), 616 to 636 (AILS…PLAL), and 656 to 676 (IYGL…DLLL).

The protein belongs to the cation transport ATPase (P-type) (TC 3.A.3) family. Type IA subfamily. In terms of assembly, the system is composed of three essential subunits: KdpA, KdpB and KdpC.

It localises to the cell inner membrane. The enzyme catalyses K(+)(out) + ATP + H2O = K(+)(in) + ADP + phosphate + H(+). Part of the high-affinity ATP-driven potassium transport (or Kdp) system, which catalyzes the hydrolysis of ATP coupled with the electrogenic transport of potassium into the cytoplasm. This subunit is responsible for energy coupling to the transport system and for the release of the potassium ions to the cytoplasm. The chain is Potassium-transporting ATPase ATP-binding subunit from Escherichia coli O6:K15:H31 (strain 536 / UPEC).